The primary structure comprises 132 residues: Histone H2A (132 aa).

The span at 1–10 (MTGGKSGGKA) shows a compositional bias: gly residues. Residues 1–24 (MTGGKSGGKASGSKNAQSRSSKAG) form a disordered region. 2 positions are modified to N6-acetyllysine: lysine 5 and lysine 9. N5-methylglutamine is present on glutamine 106. Residue serine 129 is modified to Phosphoserine. A [ST]-Q motif motif is present at residues 129 to 130 (SQ).

The protein belongs to the histone H2A family. As to quaternary structure, the nucleosome is a histone octamer containing two molecules each of H2A, H2B, H3 and H4 assembled in one H3-H4 heterotetramer and two H2A-H2B heterodimers. The octamer wraps approximately 147 bp of DNA. In terms of processing, phosphorylated to form H2AS128ph (gamma-H2A) in response to DNA double-strand breaks (DSBs) generated by exogenous genotoxic agents and by stalled replication forks. Phosphorylation is dependent on the DNA damage checkpoint kinases mec1/ATR and tel1/ATM, spreads on either side of a detected DSB site and may mark the surrounding chromatin for recruitment of proteins required for DNA damage signaling and repair. Gamma-H2A is removed from the DNA prior to the strand invasion-primer extension step of the repair process and subsequently dephosphorylated. Dephosphorylation is necessary for efficient recovery from the DNA damage checkpoint. Acetylated by esa1 to form H2AK4ac and H2AK7ac.

Its subcellular location is the nucleus. It is found in the chromosome. In terms of biological role, core component of nucleosome which plays a central role in DNA double strand break (DSB) repair. Nucleosomes wrap and compact DNA into chromatin, limiting DNA accessibility to the cellular machineries which require DNA as a template. Histones thereby play a central role in transcription regulation, DNA repair, DNA replication and chromosomal stability. DNA accessibility is regulated via a complex set of post-translational modifications of histones, also called histone code, and nucleosome remodeling. The polypeptide is Histone H2A (htaA) (Emericella nidulans (strain FGSC A4 / ATCC 38163 / CBS 112.46 / NRRL 194 / M139) (Aspergillus nidulans)).